Reading from the N-terminus, the 322-residue chain is Putative ankyrin repeat protein L897 (322 aa).

ANK repeat units follow at residues 88–117 (DNEY…SYDM), 181–210 (NIID…FWAN), and 248–277 (NKNE…QTDH).

This Acanthamoeba polyphaga (Amoeba) protein is Putative ankyrin repeat protein L897.